The chain runs to 88 residues: Small ribosomal subunit protein uS15 (88 aa).

This sequence belongs to the universal ribosomal protein uS15 family. In terms of assembly, part of the 30S ribosomal subunit. Forms a bridge to the 50S subunit in the 70S ribosome, contacting the 23S rRNA.

One of the primary rRNA binding proteins, it binds directly to 16S rRNA where it helps nucleate assembly of the platform of the 30S subunit by binding and bridging several RNA helices of the 16S rRNA. Its function is as follows. Forms an intersubunit bridge (bridge B4) with the 23S rRNA of the 50S subunit in the ribosome. In Mycoplasmopsis pulmonis (strain UAB CTIP) (Mycoplasma pulmonis), this protein is Small ribosomal subunit protein uS15.